A 198-amino-acid polypeptide reads, in one-letter code: Ribonuclease HII (198 aa).

The RNase H type-2 domain maps to 10-198 (QLVAGVDEVG…PVKRALGLAS (189 aa)). The a divalent metal cation site is built by D16, E17, and D108.

It belongs to the RNase HII family. Requires Mn(2+) as cofactor. It depends on Mg(2+) as a cofactor.

The protein resides in the cytoplasm. The catalysed reaction is Endonucleolytic cleavage to 5'-phosphomonoester.. Its function is as follows. Endonuclease that specifically degrades the RNA of RNA-DNA hybrids. The sequence is that of Ribonuclease HII from Escherichia coli O81 (strain ED1a).